We begin with the raw amino-acid sequence, 315 residues long: Methionyl-tRNA formyltransferase (315 aa).

107-110 (SLLP) is a (6S)-5,6,7,8-tetrahydrofolate binding site.

It belongs to the Fmt family.

It carries out the reaction L-methionyl-tRNA(fMet) + (6R)-10-formyltetrahydrofolate = N-formyl-L-methionyl-tRNA(fMet) + (6S)-5,6,7,8-tetrahydrofolate + H(+). Attaches a formyl group to the free amino group of methionyl-tRNA(fMet). The formyl group appears to play a dual role in the initiator identity of N-formylmethionyl-tRNA by promoting its recognition by IF2 and preventing the misappropriation of this tRNA by the elongation apparatus. This Borrelia garinii subsp. bavariensis (strain ATCC BAA-2496 / DSM 23469 / PBi) (Borreliella bavariensis) protein is Methionyl-tRNA formyltransferase.